We begin with the raw amino-acid sequence, 319 residues long: uncharacterized protein (319 aa).

Over residues 268–312 the composition is skewed to low complexity; sequence SSVVAVTHPPSTTSTTTSVSETLSSFIAPSDLSSQPSPSSHPSSP. Positions 268 to 319 are disordered; the sequence is SSVVAVTHPPSTTSTTTSVSETLSSFIAPSDLSSQPSPSSHPSSPFGNHNEF.

This is an uncharacterized protein from Lepidoptera (butterflies and moths).